Here is a 201-residue protein sequence, read N- to C-terminus: Protein CD300H (201 aa).

An N-terminal signal peptide occupies residues 1–24 (MTQRAGAAMLPSALLLLCVPGCLT). In terms of domain architecture, Ig-like V-type spans 25–123 (VSGPSTVMGA…ATILQEDGLS (99 aa)). Topologically, residues 25–168 (VSGPSTVMGA…CQGSLPSSTC (144 aa)) are extracellular. Cysteine 43 and cysteine 111 are oxidised to a cystine. N-linked (GlcNAc...) asparagine glycosylation occurs at asparagine 100. A helical membrane pass occupies residues 169-189 (FLLLPLLKVPLLLSILGAILW). Over 190–201 (VNRPWRTPWTES) the chain is Cytoplasmic.

This sequence belongs to the CD300 family. As to quaternary structure, interacts with TYROBP and HCST. In terms of tissue distribution, expressed on CD16+ monocytes and myeloid dendritic cells (at protein level). By contrast, not detected in lymphocytes nor granulocytes (at protein level).

It is found in the membrane. The protein localises to the secreted. In terms of biological role, may play an important role in innate immunity by mediating a signal for the production of a neutrophil chemoattractant. The sequence is that of Protein CD300H from Homo sapiens (Human).